A 171-amino-acid chain; its full sequence is Peptide deformylase 1 (171 aa).

Fe cation contacts are provided by cysteine 99 and histidine 141. The active site involves glutamate 142. Histidine 145 serves as a coordination point for Fe cation.

Belongs to the polypeptide deformylase family. Fe(2+) is required as a cofactor.

The enzyme catalyses N-terminal N-formyl-L-methionyl-[peptide] + H2O = N-terminal L-methionyl-[peptide] + formate. Removes the formyl group from the N-terminal Met of newly synthesized proteins. Requires at least a dipeptide for an efficient rate of reaction. N-terminal L-methionine is a prerequisite for activity but the enzyme has broad specificity at other positions. The sequence is that of Peptide deformylase 1 from Xanthomonas campestris pv. campestris (strain ATCC 33913 / DSM 3586 / NCPPB 528 / LMG 568 / P 25).